Consider the following 585-residue polypeptide: ATP-dependent lipid A-core flippase (585 aa).

6 helical membrane passes run 18–38 (LWPTIAPFKIGLIAAAAALVL), 68–88 (LMAVLVIVFIFIRGITSFISS), 142–162 (SNALVTIVREGAYIISLLAVM), 163–183 (IATSWQLSVVLFIIGPVIAVL), 255–275 (PIVQIIASLALSAVLYLATIP), and 277–297 (IMSQNLSAGSFTVVFSSMLAM). The 284-residue stretch at 30 to 313 (IAAAAALVLN…LTNVNSQFQR (284 aa)) folds into the ABC transmembrane type-1 domain. The region spanning 345 to 581 (VSFKDVSFTY…NGAYKQLHKM (237 aa)) is the ABC transporter domain. 379–386 (GRSGSGKS) lines the ATP pocket.

The protein belongs to the ABC transporter superfamily. Lipid exporter (TC 3.A.1.106) family. Homodimer.

Its subcellular location is the cell inner membrane. The catalysed reaction is ATP + H2O + lipid A-core oligosaccharideSide 1 = ADP + phosphate + lipid A-core oligosaccharideSide 2.. Functionally, involved in lipopolysaccharide (LPS) biosynthesis. Translocates lipid A-core from the inner to the outer leaflet of the inner membrane. Transmembrane domains (TMD) form a pore in the inner membrane and the ATP-binding domain (NBD) is responsible for energy generation. This Mannheimia succiniciproducens (strain KCTC 0769BP / MBEL55E) protein is ATP-dependent lipid A-core flippase.